The following is a 334-amino-acid chain: Proline-serine-threonine phosphatase-interacting protein 2 (334 aa).

Positions 4–264 (SLFKGNFWST…SLETCSIEKD (261 aa)) constitute an F-BAR domain. Residues 66 to 163 (GQSEINTLKR…AEQAVHRSAN (98 aa)) are a coiled coil. The interval 288 to 322 (YSPQRNAAPPGKTTGPNPARRGPLPVPKRIPDDPD) is disordered. Phosphotyrosine occurs at positions 323 and 329.

Post-translationally, phosphorylated on tyrosine. In terms of tissue distribution, expressed in macrophage-containing tissues, including bone marrow, spleen, liver, kidney, intestine and brain.

The protein resides in the cytoplasm. Its subcellular location is the membrane. Its function is as follows. Binds to F-actin. May be involved in regulation of the actin cytoskeleton. In Mus musculus (Mouse), this protein is Proline-serine-threonine phosphatase-interacting protein 2 (Pstpip2).